The following is a 166-amino-acid chain: MISYKNILIAVDGSHEAEWAFNKAVGVAKRNDAQLTIVNVIDSRTYSSYEVYDAQFTEKSKHFSEELLKGYKEVATNAGVKNVDTRLEFGSPKAIIPKKLARDVGADLIMSGTSGLNAVERFIVGSVSEAIVRHAPCDVLVVRTEEMPEDFQPQVATPQLREKYQD.

Belongs to the universal stress protein A family.

The protein resides in the cytoplasm. The sequence is that of Putative universal stress protein SE_1385 from Staphylococcus epidermidis (strain ATCC 12228 / FDA PCI 1200).